A 353-amino-acid chain; its full sequence is Histidinol-phosphate aminotransferase (353 aa).

Residue lysine 211 is modified to N6-(pyridoxal phosphate)lysine.

It belongs to the class-II pyridoxal-phosphate-dependent aminotransferase family. Histidinol-phosphate aminotransferase subfamily. As to quaternary structure, homodimer. The cofactor is pyridoxal 5'-phosphate.

It catalyses the reaction L-histidinol phosphate + 2-oxoglutarate = 3-(imidazol-4-yl)-2-oxopropyl phosphate + L-glutamate. It participates in amino-acid biosynthesis; L-histidine biosynthesis; L-histidine from 5-phospho-alpha-D-ribose 1-diphosphate: step 7/9. The protein is Histidinol-phosphate aminotransferase of Marinomonas sp. (strain MWYL1).